The primary structure comprises 183 residues: Ankyrin repeat domain-containing protein 39 (183 aa).

4 ANK repeats span residues 30-59, 63-92, 96-125, and 129-158; these read DFER…DPSQ, AGYT…KCDA, GGAT…NPRL, and DGMT…ALKA. S153 carries the post-translational modification Phosphoserine.

This sequence belongs to the ANKRD39 family.

This chain is Ankyrin repeat domain-containing protein 39 (ANKRD39), found in Bos taurus (Bovine).